The sequence spans 215 residues: Ribosomal RNA small subunit methyltransferase G (215 aa).

S-adenosyl-L-methionine-binding positions include G78, L83, 128–129 (AE), and R146.

This sequence belongs to the methyltransferase superfamily. RNA methyltransferase RsmG family.

The protein localises to the cytoplasm. The enzyme catalyses guanosine(527) in 16S rRNA + S-adenosyl-L-methionine = N(7)-methylguanosine(527) in 16S rRNA + S-adenosyl-L-homocysteine. Functionally, specifically methylates the N7 position of guanine in position 527 of 16S rRNA. The polypeptide is Ribosomal RNA small subunit methyltransferase G (Anaeromyxobacter dehalogenans (strain 2CP-1 / ATCC BAA-258)).